The chain runs to 385 residues: Signal transduction histidine-protein kinase/phosphatase DegS (385 aa).

Positions 31–141 form a coiled coil; it reads QIGEQSRQQY…IERSESLVSQ (111 aa). Position 76 is a phosphoserine (S76). Positions 183–385 constitute a Histidine kinase domain; sequence RVSREIHDGP…FIMIKVPLSL (203 aa). Residue H189 is modified to Phosphohistidine; by autocatalysis.

Autophosphorylated. Phosphorylated in vitro at Ser-76 by the serine/threonine-protein kinase YbdM, which stimulates the phosphate transfer to DegU.

The protein resides in the cytoplasm. It carries out the reaction ATP + protein L-histidine = ADP + protein N-phospho-L-histidine.. With respect to regulation, regulated via serine phosphorylation of its input domain. Phosphotransfer from DegS to DegU is stimulated by phosphorylation on Ser-76 and by DegQ. Its function is as follows. Member of the two-component regulatory system DegS/DegU, which plays an important role in the transition growth phase. Involved in the control of expression of different cellular functions, including production of degradative enzymes such as the neutral and alkaline proteases, flagellum formation and biofilm formation. Acts both as a protein kinase that undergoes autophosphorylation and subsequently transfers the phosphate to DegU, and as a protein phosphatase that dephosphorylates phospho-DegU. The protein is Signal transduction histidine-protein kinase/phosphatase DegS (degS) of Bacillus subtilis (strain 168).